The primary structure comprises 88 residues: UPF0297 protein BLi02868/BL02032 (88 aa).

This sequence belongs to the UPF0297 family.

This is UPF0297 protein BLi02868/BL02032 from Bacillus licheniformis (strain ATCC 14580 / DSM 13 / JCM 2505 / CCUG 7422 / NBRC 12200 / NCIMB 9375 / NCTC 10341 / NRRL NRS-1264 / Gibson 46).